A 334-amino-acid polypeptide reads, in one-letter code: Aspartate carbamoyltransferase catalytic subunit (334 aa).

The carbamoyl phosphate site is built by Arg71 and Thr72. L-aspartate is bound at residue Lys99. The carbamoyl phosphate site is built by Arg121, His151, and Gln154. Arg184 and Arg239 together coordinate L-aspartate. Positions 280 and 281 each coordinate carbamoyl phosphate.

This sequence belongs to the aspartate/ornithine carbamoyltransferase superfamily. ATCase family. As to quaternary structure, heterododecamer (2C3:3R2) of six catalytic PyrB chains organized as two trimers (C3), and six regulatory PyrI chains organized as three dimers (R2).

The enzyme catalyses carbamoyl phosphate + L-aspartate = N-carbamoyl-L-aspartate + phosphate + H(+). It participates in pyrimidine metabolism; UMP biosynthesis via de novo pathway; (S)-dihydroorotate from bicarbonate: step 2/3. Catalyzes the condensation of carbamoyl phosphate and aspartate to form carbamoyl aspartate and inorganic phosphate, the committed step in the de novo pyrimidine nucleotide biosynthesis pathway. This is Aspartate carbamoyltransferase catalytic subunit from Pseudomonas putida (strain ATCC 47054 / DSM 6125 / CFBP 8728 / NCIMB 11950 / KT2440).